A 236-amino-acid chain; its full sequence is Phosphoribosylaminoimidazole-succinocarboxamide synthase (236 aa).

Belongs to the SAICAR synthetase family.

The catalysed reaction is 5-amino-1-(5-phospho-D-ribosyl)imidazole-4-carboxylate + L-aspartate + ATP = (2S)-2-[5-amino-1-(5-phospho-beta-D-ribosyl)imidazole-4-carboxamido]succinate + ADP + phosphate + 2 H(+). It functions in the pathway purine metabolism; IMP biosynthesis via de novo pathway; 5-amino-1-(5-phospho-D-ribosyl)imidazole-4-carboxamide from 5-amino-1-(5-phospho-D-ribosyl)imidazole-4-carboxylate: step 1/2. The sequence is that of Phosphoribosylaminoimidazole-succinocarboxamide synthase from Streptococcus equi subsp. zooepidemicus (strain H70).